Here is an 872-residue protein sequence, read N- to C-terminus: Trichohyalin-like protein 1 (872 aa).

Residues 46–81 (CAIHAVERNLNLLNIDSNGAISFDEFVLAIFSFLNV) enclose the EF-hand domain. Residues 117-127 (QWTEGTSQTQD) show a composition bias toward polar residues. Disordered regions lie at residues 117–759 (QWTE…ERGA), 774–813 (LQQTNVTQGEHQNQAQTASVASPEIRRNQSSASLTNDSSD), and 830–872 (EFLP…APKQ). Basic and acidic residues-rich tracts occupy residues 142–155 (SLEERAVEHNRVDP), 164–190 (LPVETSEHSDSKNQHLKGDEQSQKVDQ), 218–235 (TKGEGQNKEILQKGDILA), 296–307 (GKDEPSSEHVDL), 324–348 (AAKDESRTAETPEPPIQEKEYETRD), 365–375 (RVERKGVRGPE), 399–435 (EDKKYHELQESSKEKNAGEDSETHELNSEGGEQKDSE), and 486–505 (SGEKNKMTTKIHDKLVKEDD). A compositionally biased stretch (polar residues) spans 538–570 (NSETSDLFVQGDSQSQTNPFRGSVQGSDSNNPE). Composition is skewed to basic and acidic residues over residues 571–584 (TQKHLALSEEKRVQ), 592–608 (RGEDEQVTEEHAQEHEG), and 664–684 (TKKDSRKELKDQSPSTKKEED). Composition is skewed to polar residues over residues 699–708 (ENNAVSQKTC) and 718–729 (SPQQLAGEQSLS). The span at 730–751 (TKEHDPSVSESGLEERMQRDQE) shows a compositional bias: basic and acidic residues. Polar residues-rich tracts occupy residues 774–793 (LQQTNVTQGEHQNQAQTASV) and 801–812 (NQSSASLTNDSS). Residues 849-865 (LEDKQGRPQREELEPQK) are compositionally biased toward basic and acidic residues.

This sequence belongs to the S-100 family.

This is Trichohyalin-like protein 1 (TCHHL1) from Bos taurus (Bovine).